We begin with the raw amino-acid sequence, 319 residues long: Lambda-crystallin (319 aa).

A2 bears the N-acetylalanine mark. S3 is modified (phosphoserine). NAD(+) is bound by residues 16-17 (LV), D36, E97, and K102. S111 carries the post-translational modification Phosphoserine.

It belongs to the 3-hydroxyacyl-CoA dehydrogenase family. As to quaternary structure, homodimer. Detected in eye lens, kidney, liver, heart, lung, brain and testis.

It is found in the cytoplasm. The catalysed reaction is L-gulonate + NAD(+) = 3-dehydro-L-gulonate + NADH + H(+). With respect to regulation, inhibited by malonate and by inorganic phosphate. Functionally, functions as a crystallin in the rabbit eye lens. Has high L-gulonate 3-dehydrogenase activity. It also exhibits low dehydrogenase activity toward L-3-hydroxybutyrate (HBA) and L-threonate. In Oryctolagus cuniculus (Rabbit), this protein is Lambda-crystallin (CRYL1).